The following is a 205-amino-acid chain: Putative 3-methyladenine DNA glycosylase (205 aa).

Belongs to the DNA glycosylase MPG family.

This Bacillus cereus (strain ATCC 10987 / NRS 248) protein is Putative 3-methyladenine DNA glycosylase.